A 158-amino-acid chain; its full sequence is uncharacterized protein (158 aa).

The next 4 helical transmembrane spans lie at 42 to 62 (FHFAVIVITMLAYLSAFGFLY), 71 to 91 (WIFIGFLGSMVINAIFPHLIA), 102 to 122 (LLTGLLLNIPVNSLVIYQMFL), and 130 to 150 (ELIISTLVVGIILLALIPLLF).

It localises to the cell membrane. This is an uncharacterized protein from Bacillus subtilis (strain 168).